Reading from the N-terminus, the 530-residue chain is UPF0422 protein lpg2959 (530 aa).

A signal peptide spans 1 to 19 (MKFKKIILALACLSSPLYA). A coiled-coil region spans residues 20-66 (DQDQQLKSEIQRLQHQAEDLQAQLNRLQKQLANHKSSQQKHEQQAAA). Positions 50 to 81 (LANHKSSQQKHEQQAAAKPAEPQSKPTVKSGA) are disordered. A compositionally biased stretch (low complexity) spans 63-75 (QAAAKPAEPQSKP).

This sequence belongs to the UPF0422 family.

This chain is UPF0422 protein lpg2959, found in Legionella pneumophila subsp. pneumophila (strain Philadelphia 1 / ATCC 33152 / DSM 7513).